The primary structure comprises 138 residues: ATP synthase epsilon chain, chloroplastic (138 aa).

Belongs to the ATPase epsilon chain family. As to quaternary structure, F-type ATPases have 2 components, CF(1) - the catalytic core - and CF(0) - the membrane proton channel. CF(1) has five subunits: alpha(3), beta(3), gamma(1), delta(1), epsilon(1). CF(0) has three main subunits: a, b and c.

The protein resides in the plastid. The protein localises to the chloroplast thylakoid membrane. In terms of biological role, produces ATP from ADP in the presence of a proton gradient across the membrane. The protein is ATP synthase epsilon chain, chloroplastic of Staurastrum punctulatum (Green alga).